Here is a 145-residue protein sequence, read N- to C-terminus: Large ribosomal subunit protein uL13 (145 aa).

Belongs to the universal ribosomal protein uL13 family. In terms of assembly, part of the 50S ribosomal subunit. Binds to Obg (AC P20964).

This protein is one of the early assembly proteins of the 50S ribosomal subunit, although it is not seen to bind rRNA by itself. It is important during the early stages of 50S assembly. This Bacillus subtilis (strain 168) protein is Large ribosomal subunit protein uL13.